The following is a 566-amino-acid chain: Endoglucanase B (566 aa).

Positions 1–30 (MKKRRSSKVILSLAIVVALLAAVEPNAALA) are cleaved as a signal peptide. Glu177 (proton donor) is an active-site residue. The active-site Nucleophile is Glu299.

This sequence belongs to the glycosyl hydrolase 5 (cellulase A) family.

The enzyme catalyses Endohydrolysis of (1-&gt;4)-beta-D-glucosidic linkages in cellulose, lichenin and cereal beta-D-glucans.. This chain is Endoglucanase B (celB), found in Paenibacillus lautus (Bacillus lautus).